We begin with the raw amino-acid sequence, 1141 residues long: cGMP-inhibited 3',5'-cyclic phosphodiesterase 3A (1141 aa).

Residues 1–42 are disordered; sequence MAVRGEAAQDLAKPGLGGASPARVARGNHRHRGESSPSPRGS. A helical membrane pass occupies residues 62–82; sequence SALCAGSLSVLLALLVRLVGG. Residues 90–111 form a disordered region; sequence KSQEAAAEEEEEEGARGGVFPG. The next 5 helical transmembrane spans lie at 127–147, 157–177, 182–202, 207–227, and 229–249; these read LQPAALLFSLLCAFFWMGLCL, AVALLAACCAGEALVQLSLGV, LLSLPAAGVLLSCLGGATWLV, LGVLMVAWTSVLRTVALVSLE, and FKVAWRPYLAYLAAVLGLLLA. Residue Ser310 is modified to Phosphoserine. Residues 433–445 are compositionally biased toward low complexity; it reads RVSSTWTTTTSAT. The segment at 433 to 483 is disordered; the sequence is RVSSTWTTTTSATGLPTLEPAPVRRDRSASIKPHEAPSPSAVNPDSWNAPG. Basic and acidic residues predominate over residues 454–467; it reads PVRRDRSASIKPHE. Residues 472-483 show a composition bias toward polar residues; it reads SAVNPDSWNAPG. Residues Ser492, Ser520, Ser524, and Ser533 each carry the phosphoserine modification. The segment at 505–654 is disordered; it reads VKAKKQNRPG…CQREPQRKAS (150 aa). A compositionally biased stretch (pro residues) spans 522–532; the sequence is VPSPSSSPPQG. Residues 533–544 show a composition bias toward low complexity; the sequence is SPASSPVSNSAS. Polar residues predominate over residues 618 to 637; it reads TSQVTSDYETNNNSDSSDIL. The interaction with SLFN12 stretch occupies residues 669–1141; the sequence is KPILAPEPLV…EETLAPQPDL (473 aa). The PDEase domain occupies 674–1093; that stretch reads PEPLVMDNLD…MMWKKVIEEE (420 aa). The Proton donor role is filled by His752. Residue His752 coordinates AMP. Mn(2+) contacts are provided by His756, His836, Asp837, and Asp950. AMP contacts are provided by Asp837, Asp950, and Gln1001. Position 837 (Asp837) interacts with Mg(2+). 2 disordered regions span residues 1024-1060 and 1120-1141; these read GKWVDDSDDSGDTDDPEEEEEEAETPHEDEACESSIA and KEEEEEKGKPRAEETLAPQPDL. Residues 1029-1046 are compositionally biased toward acidic residues; that stretch reads DSDDSGDTDDPEEEEEEA. Phosphoserine is present on Ser1033. The residue at position 1036 (Thr1036) is a Phosphothreonine. Lys1120 participates in a covalent cross-link: Glycyl lysine isopeptide (Lys-Gly) (interchain with G-Cter in SUMO2).

The protein belongs to the cyclic nucleotide phosphodiesterase family. PDE3 subfamily. Mn(2+) is required as a cofactor. It depends on Mg(2+) as a cofactor.

Its subcellular location is the membrane. It localises to the cytoplasm. The protein localises to the cytosol. The enzyme catalyses a nucleoside 3',5'-cyclic phosphate + H2O = a nucleoside 5'-phosphate + H(+). It carries out the reaction 3',5'-cyclic AMP + H2O = AMP + H(+). It catalyses the reaction 3',5'-cyclic GMP + H2O = GMP + H(+). The catalysed reaction is 3',5'-cyclic UMP + H2O = UMP + H(+). Inhibited by cGMP. Its function is as follows. Cyclic nucleotide phosphodiesterase with specificity for the second messengers cAMP and cGMP, which are key regulators of many important physiological processes. Also has activity toward cUMP. Independently of its catalytic activity it is part of an E2/17beta-estradiol-induced pro-apoptotic signaling pathway. E2 stabilizes the PDE3A/SLFN12 complex in the cytosol, promoting the dephosphorylation of SLFN12 and activating its pro-apoptotic ribosomal RNA/rRNA ribonuclease activity. This apoptotic pathway might be relevant in tissues with high concentration of E2 and be for instance involved in placenta remodeling. This chain is cGMP-inhibited 3',5'-cyclic phosphodiesterase 3A, found in Mus musculus (Mouse).